The sequence spans 271 residues: Phosphatidylglycerol--prolipoprotein diacylglyceryl transferase (271 aa).

The next 4 helical transmembrane spans lie at 18 to 38 (LSVH…LWMA), 51 to 71 (IFID…RAYY), 89 to 109 (IWKG…TGIV), and 115 to 135 (GISF…GQAI). Arg-137 is an a 1,2-diacyl-sn-glycero-3-phospho-(1'-sn-glycerol) binding site. The next 3 helical transmembrane spans lie at 177 to 197 (HPTF…LLLL), 205 to 225 (GNLF…IEGM), and 236 to 256 (LRIA…LMIF).

The protein belongs to the Lgt family.

It is found in the cell membrane. The catalysed reaction is L-cysteinyl-[prolipoprotein] + a 1,2-diacyl-sn-glycero-3-phospho-(1'-sn-glycerol) = an S-1,2-diacyl-sn-glyceryl-L-cysteinyl-[prolipoprotein] + sn-glycerol 1-phosphate + H(+). It functions in the pathway protein modification; lipoprotein biosynthesis (diacylglyceryl transfer). Functionally, catalyzes the transfer of the diacylglyceryl group from phosphatidylglycerol to the sulfhydryl group of the N-terminal cysteine of a prolipoprotein, the first step in the formation of mature lipoproteins. This Bacillus velezensis (strain DSM 23117 / BGSC 10A6 / LMG 26770 / FZB42) (Bacillus amyloliquefaciens subsp. plantarum) protein is Phosphatidylglycerol--prolipoprotein diacylglyceryl transferase.